Consider the following 299-residue polypeptide: UDP-N-acetylenolpyruvoylglucosamine reductase (299 aa).

An FAD-binding PCMH-type domain is found at lysine 28 to glycine 193. Arginine 172 is a catalytic residue. Serine 222 serves as the catalytic Proton donor. Glutamate 292 is a catalytic residue.

Requires FAD as cofactor.

The protein resides in the cytoplasm. The enzyme catalyses UDP-N-acetyl-alpha-D-muramate + NADP(+) = UDP-N-acetyl-3-O-(1-carboxyvinyl)-alpha-D-glucosamine + NADPH + H(+). The protein operates within cell wall biogenesis; peptidoglycan biosynthesis. Functionally, cell wall formation. The protein is UDP-N-acetylenolpyruvoylglucosamine reductase of Lactococcus lactis subsp. cremoris (strain MG1363).